Here is a 540-residue protein sequence, read N- to C-terminus: tRNA-2-methylthio-N(6)-dimethylallyladenosine synthase (540 aa).

The MTTase N-terminal domain maps to 41 to 157; sequence RTYEVRTFGC…LPTLLERSAH (117 aa). [4Fe-4S] cluster-binding residues include cysteine 50, cysteine 86, cysteine 120, cysteine 194, cysteine 198, and cysteine 201. Residues 180 to 416 enclose the Radical SAM core domain; that stretch reads RESAYSGWVS…IALQERIQAE (237 aa). Residues 419-486 enclose the TRAM domain; that stretch reads KELVGTTQEL…PFFLIADGPL (68 aa).

It belongs to the methylthiotransferase family. MiaB subfamily. As to quaternary structure, monomer. It depends on [4Fe-4S] cluster as a cofactor.

The protein resides in the cytoplasm. It carries out the reaction N(6)-dimethylallyladenosine(37) in tRNA + (sulfur carrier)-SH + AH2 + 2 S-adenosyl-L-methionine = 2-methylsulfanyl-N(6)-dimethylallyladenosine(37) in tRNA + (sulfur carrier)-H + 5'-deoxyadenosine + L-methionine + A + S-adenosyl-L-homocysteine + 2 H(+). Its function is as follows. Catalyzes the methylthiolation of N6-(dimethylallyl)adenosine (i(6)A), leading to the formation of 2-methylthio-N6-(dimethylallyl)adenosine (ms(2)i(6)A) at position 37 in tRNAs that read codons beginning with uridine. In Corynebacterium urealyticum (strain ATCC 43042 / DSM 7109), this protein is tRNA-2-methylthio-N(6)-dimethylallyladenosine synthase.